The primary structure comprises 1050 residues: Probable E3 ubiquitin-protein ligase HERC3 (1050 aa).

RCC1 repeat units lie at residues 1 to 51 (MLCW…FLLE), 52 to 101 (DGEV…ALSD), 102 to 154 (RGQL…ALAA), 156 to 207 (GQFF…ALSL), 208 to 259 (SGAV…VLTK), 261 to 311 (GGVF…AFVP), and 313 to 366 (SGLI…IVKQ). The region spanning 951–1050 (YKGDYSATHP…LDNYEGFSLA (100 aa)) is the HECT domain. The active-site Glycyl thioester intermediate is cysteine 1018.

In terms of processing, ubiquitinated; which promotes degradation by the proteasome.

The protein resides in the cytoplasm. Its subcellular location is the cytoplasmic vesicle. The catalysed reaction is S-ubiquitinyl-[E2 ubiquitin-conjugating enzyme]-L-cysteine + [acceptor protein]-L-lysine = [E2 ubiquitin-conjugating enzyme]-L-cysteine + N(6)-ubiquitinyl-[acceptor protein]-L-lysine.. The protein operates within protein modification; protein ubiquitination. E3 ubiquitin-protein ligase which accepts ubiquitin from an E2 ubiquitin-conjugating enzyme in the form of a thioester and then directly transfers the ubiquitin to targeted substrates. This chain is Probable E3 ubiquitin-protein ligase HERC3 (HERC3), found in Homo sapiens (Human).